We begin with the raw amino-acid sequence, 201 residues long: Imidazole glycerol phosphate synthase subunit HisH (201 aa).

The region spanning 1 to 201 (MVFIADYGAG…LKVLANFAEL (201 aa)) is the Glutamine amidotransferase type-1 domain. Cysteine 79 (nucleophile) is an active-site residue. Active-site residues include histidine 183 and glutamate 185.

As to quaternary structure, heterodimer of HisH and HisF.

It localises to the cytoplasm. It carries out the reaction 5-[(5-phospho-1-deoxy-D-ribulos-1-ylimino)methylamino]-1-(5-phospho-beta-D-ribosyl)imidazole-4-carboxamide + L-glutamine = D-erythro-1-(imidazol-4-yl)glycerol 3-phosphate + 5-amino-1-(5-phospho-beta-D-ribosyl)imidazole-4-carboxamide + L-glutamate + H(+). The catalysed reaction is L-glutamine + H2O = L-glutamate + NH4(+). It participates in amino-acid biosynthesis; L-histidine biosynthesis; L-histidine from 5-phospho-alpha-D-ribose 1-diphosphate: step 5/9. Functionally, IGPS catalyzes the conversion of PRFAR and glutamine to IGP, AICAR and glutamate. The HisH subunit catalyzes the hydrolysis of glutamine to glutamate and ammonia as part of the synthesis of IGP and AICAR. The resulting ammonia molecule is channeled to the active site of HisF. This is Imidazole glycerol phosphate synthase subunit HisH from Chlorobium chlorochromatii (strain CaD3).